The chain runs to 279 residues: NADPH-dependent 7-cyano-7-deazaguanine reductase (279 aa).

Position 86–88 (86–88 (IES)) interacts with substrate. NADPH is bound at residue 88–89 (SK). C187 (thioimide intermediate) is an active-site residue. D194 (proton donor) is an active-site residue. 226–227 (HE) contacts substrate. Residue 255-256 (RG) participates in NADPH binding.

It belongs to the GTP cyclohydrolase I family. QueF type 2 subfamily. In terms of assembly, homodimer.

It is found in the cytoplasm. It catalyses the reaction 7-aminomethyl-7-carbaguanine + 2 NADP(+) = 7-cyano-7-deazaguanine + 2 NADPH + 3 H(+). Its pathway is tRNA modification; tRNA-queuosine biosynthesis. Functionally, catalyzes the NADPH-dependent reduction of 7-cyano-7-deazaguanine (preQ0) to 7-aminomethyl-7-deazaguanine (preQ1). The chain is NADPH-dependent 7-cyano-7-deazaguanine reductase from Pasteurella multocida (strain Pm70).